The sequence spans 568 residues: Natural resistance-associated macrophage protein 2 (568 aa).

Over residues 1–20 the composition is skewed to basic and acidic residues; it reads MVLDPKEKMPDDGASGDHGD. Residues 1–45 are disordered; that stretch reads MVLDPKEKMPDDGASGDHGDSASLGAINPAYSNSSLPHSTGDSEE. The Cytoplasmic segment spans residues 1–69; it reads MVLDPKEKMP…EEYSCFSFRK (69 aa). Residues 30 to 40 are compositionally biased toward polar residues; that stretch reads AYSNSSLPHST. A helical membrane pass occupies residues 70-90; that stretch reads LWAFTGPGFLMSIAYLDPGNI. The Extracellular segment spans residues 91–95; that stretch reads ESDLQ. The helical transmembrane segment at 96 to 117 threads the bilayer; sequence SGAVAGFKLLWVLLLATIVGLL. Residues 118–154 are Cytoplasmic-facing; the sequence is LQRLAARLGVVTGLHLAEVCHRQYPKVPRIILWLMVE. A helical membrane pass occupies residues 155-175; it reads LAIIGSDMQEVIGSAIAINLL. The Extracellular portion of the chain corresponds to 176–179; sequence SAGR. Residues 180–194 traverse the membrane as a helical segment; that stretch reads VPLWGGVLITIADTF. The Cytoplasmic portion of the chain corresponds to 195–208; sequence VFLFLDKYGLRKLE. Residues 209–229 form a helical membrane-spanning segment; the sequence is AFFGFLITIMALTFGYEYITV. The Extracellular segment spans residues 230 to 255; the sequence is KPSQSQVLRGMFVPSCPGCRTPQVEQ. A helical membrane pass occupies residues 256–276; the sequence is AVGIVGAVIMPHNMYLHSALV. At 277–301 the chain is on the cytoplasmic side; the sequence is KSRQVNRANKQEVREANKYFFIESC. A helical transmembrane segment spans residues 302-322; sequence IALFVSFIINVFVVSVFAEAF. At 323–360 the chain is on the extracellular side; sequence FEKTNKQVVEVCKNNSSPHADLFPSDNSTLAVDIYKGG. N336 and N349 each carry an N-linked (GlcNAc...) asparagine glycan. Residues 361–381 traverse the membrane as a helical segment; that stretch reads VVLGCYFGPAALYIWAVGILA. Topologically, residues 382–408 are cytoplasmic; it reads AGQSSTMTGTYSGQFVMEGFLNLKWSR. A helical transmembrane segment spans residues 409–429; it reads FARVILTRSIAIIPTLLVAVF. The Extracellular portion of the chain corresponds to 430–440; it reads QDVEHLTGMND. A helical membrane pass occupies residues 441 to 461; the sequence is FLNVLQSLQLPFALIPILTFT. Residues 462–482 are Cytoplasmic-facing; it reads SLRPVMSEFSNGIGWRIAGGI. A helical transmembrane segment spans residues 483–503; sequence LVLIVCSINMYFVVVYVQELG. The Extracellular portion of the chain corresponds to 504–506; the sequence is HVA. The chain crosses the membrane as a helical span at residues 507–527; sequence LYVVAAVVSVAYLTFVFYLGW. Topologically, residues 528-568 are cytoplasmic; that stretch reads QCLIALGLSFLDCGRSYRLGLTAQPELYLLNTVDADSVVSR. Residues 555–559 form a required for early endosome targeting region; it reads YLLNT. L556, S564, and S567 each carry phosphoserine.

Belongs to the NRAMP family. As to quaternary structure, forms a complex with NDFIP1 and NEDD4L, in cortical neurons, in response to iron and cobalt exposure; this interaction leads to SLC11A2 ubiquitination by NEDD4L and proteasome-dependent degradation. Interacts with NDFIP1, NDFIP2 and WWP2; this interaction leads to SLC11A2 ubiquitination by WWP2 and subsequent proteasome-dependent degradation. Interacts with COX2 and TOM6 at the outer mitochondrion membrane. Interacts with ARRDC1; this interaction regulates the incorporation of SLC11A2 into extracellular vesicles through an ubiquitination-dependent mechanism. Interacts with ARRDC4; controls the incorporation of SLC11A2 into extracellular vesicles through an ubiquitination-dependent mechanism. Post-translationally, ubiquitinated by WWP2. N-glycosylated. Abundantly expressed in erythroid precursor cells (at protein level). In terms of tissue distribution, expressed in duodenum (at protein level).

It localises to the golgi apparatus. Its subcellular location is the trans-Golgi network membrane. It is found in the early endosome membrane. The protein localises to the recycling endosome membrane. The protein resides in the cell membrane. It localises to the late endosome membrane. Its subcellular location is the lysosome membrane. It is found in the apical cell membrane. The protein localises to the mitochondrion outer membrane. The protein resides in the extracellular vesicle membrane. It catalyses the reaction Fe(2+)(in) + H(+)(in) = Fe(2+)(out) + H(+)(out). It carries out the reaction Co(2+)(out) + H(+)(out) = Co(2+)(in) + H(+)(in). The enzyme catalyses Cd(2+)(out) + H(+)(out) = Cd(2+)(in) + H(+)(in). The catalysed reaction is Mn(2+)(in) + H(+)(in) = Mn(2+)(out) + H(+)(out). It catalyses the reaction Zn(2+)(out) + H(+)(out) = Zn(2+)(in) + H(+)(in). It carries out the reaction Ni(2+)(out) + H(+)(out) = Ni(2+)(in) + H(+)(in). The enzyme catalyses H(+)(in) = H(+)(out). The catalysed reaction is Fe(2+)(in) = Fe(2+)(out). Functionally, proton-coupled metal ion symporter operating with a proton to metal ion stoichiometry of 1:1. Selectively transports various divalent metal cations, in decreasing affinity: Cd(2+) &gt; Fe(2+) &gt; Co(2+), Mn(2+) &gt;&gt; Zn(2+), Ni(2+), VO(2+). Essential for maintenance of iron homeostasis by modulating intestinal absorption of dietary Fe(2+) and TF-associated endosomal Fe(2+) transport in erythroid precursors and other cells. Enables Fe(2+) and Mn(2+) ion entry into mitochondria, and is thus expected to promote mitochondrial heme synthesis, iron-sulfur cluster biogenesis and antioxidant defense. Can mediate uncoupled fluxes of either protons or metal ions. The chain is Natural resistance-associated macrophage protein 2 (Slc11a2) from Mus musculus (Mouse).